We begin with the raw amino-acid sequence, 601 residues long: Serine/threonine-protein phosphatase 2A 65 kDa regulatory subunit A beta isoform (601 aa).

Ala-2 bears the N-acetylalanine mark. HEAT repeat units follow at residues 20-58, 59-96, 97-135, 136-173, 174-212, 213-251, 252-290, 291-333, 334-372, 373-411, 412-450, 451-489, 490-528, 529-567, and 568-601; these read DSLY…GVER, TRTE…GGPD, FAHC…TPVA, LEAH…ASNA, VKAE…ELDS, VKTE…SQDD, LEAL…GPKI, ALSD…RETV, IMNQ…GKEN, TIEH…GIRQ, LSQS…GVEF, FDEK…GTEW, AQNT…GKEI, TTKQ…DTNA, and LQGE…LALA.

The protein belongs to the phosphatase 2A regulatory subunit A family. As to quaternary structure, PP2A consists of a common heterodimeric core enzyme, composed of a 36 kDa catalytic subunit (subunit C) and a 65 kDa constant regulatory subunit (PR65 or subunit A), that associates with a variety of regulatory subunits. Proteins that associate with the core dimer include three families of regulatory subunits B (the R2/B/PR55/B55, R3/B''/PR72/PR130/PR59 and R5/B'/B56 families), the 48 kDa variable regulatory subunit, viral proteins, and cell signaling molecules. Interacts with IPO9. Interacts with SGO1. Interacts with RAF1.

Its function is as follows. The PR65 subunit of protein phosphatase 2A serves as a scaffolding molecule to coordinate the assembly of the catalytic subunit and a variable regulatory B subunit. This is Serine/threonine-protein phosphatase 2A 65 kDa regulatory subunit A beta isoform (Ppp2r1b) from Rattus norvegicus (Rat).